We begin with the raw amino-acid sequence, 411 residues long: Transforming growth factor beta regulator 1 (411 aa).

Disordered stretches follow at residues 1 to 29 and 119 to 146; these read MSLL…PKKS and GPIS…KGKE. S2 carries the N-acetylserine modification. Phosphoserine is present on S10. Positions 182–241 constitute an FYR N-terminal domain; that stretch reads VFPIGLGGLTVYSLGEIITDRPGFHDESAIYPVGYCSTRIYASMKCPDQKCLYTCQIKDG. Positions 242 to 321 constitute an FYR C-terminal domain; the sequence is GVQPQFEIVP…RKCINYQWVK (80 aa).

It belongs to the TBRG1 family. As to quaternary structure, interacts with CDKN2A and MDM2. Ubiquitinated; mediated by MDM2 and leading to its subsequent proteasomal degradation. Widely expressed at low levels in most tissues, with highest levels in pancreas, lung and liver. Expression is decreased in primary tumors including lung, liver, breast, pancreas and kidney carcinomas, chronic lymphocytic leukemia and diffuse large B-cell lymphoma.

It localises to the nucleus. Acts as a growth inhibitor. Can activate p53/TP53, causes G1 arrest and collaborates with CDKN2A to restrict proliferation, but does not require either protein to inhibit DNA synthesis. Redistributes CDKN2A into the nucleoplasm. Involved in maintaining chromosomal stability. This Homo sapiens (Human) protein is Transforming growth factor beta regulator 1 (TBRG1).